A 529-amino-acid polypeptide reads, in one-letter code: GTPase Obg (529 aa).

Residues 2 to 159 enclose the Obg domain; it reads ASFVDRVVLH…SDIVLELKSI (158 aa). The OBG-type G domain occupies 160 to 343; that stretch reads ADIALVGFPS…LGFAMAEIVK (184 aa). GTP contacts are provided by residues 166-173, 191-195, 212-215, 295-298, and 324-326; these read GFPSAGKS, FTTLI, DVPG, NKVD, and SAT. 2 residues coordinate Mg(2+): Ser-173 and Thr-193. Positions 363-447 constitute an OCT domain; the sequence is PRAVNEAGFK…DDGVVFDWEP (85 aa). The span at 466–502 shows a compositional bias: basic and acidic residues; it reads FADIGDRPTRGQKRDEQQERRDAKAAARAELEAERKA. Positions 466–529 are disordered; that stretch reads FADIGDRPTR…ESGLTTENEE (64 aa).

The protein belongs to the TRAFAC class OBG-HflX-like GTPase superfamily. OBG GTPase family. As to quaternary structure, monomer. Mg(2+) serves as cofactor.

The protein resides in the cytoplasm. An essential GTPase which binds GTP, GDP and possibly (p)ppGpp with moderate affinity, with high nucleotide exchange rates and a fairly low GTP hydrolysis rate. Plays a role in control of the cell cycle, stress response, ribosome biogenesis and in those bacteria that undergo differentiation, in morphogenesis control. In Arthrobacter sp. (strain FB24), this protein is GTPase Obg.